Consider the following 160-residue polypeptide: Photosystem II extrinsic protein V (160 aa).

Residues 1 to 25 form the signal peptide; the sequence is MKRFFLVAIASVLFFFNTMVGSANA. The heme c site is built by cysteine 62, cysteine 65, histidine 66, and histidine 117.

This sequence belongs to the cytochrome c family. PsbV subfamily. PSII is composed of 1 copy each of membrane proteins PsbA, PsbB, PsbC, PsbD, PsbE, PsbF, PsbH, PsbI, PsbJ, PsbK, PsbL, PsbM, PsbT, PsbX, PsbY, PsbZ, Psb30/Ycf12, peripheral proteins PsbO, CyanoQ (PsbQ), PsbU, PsbV and a large number of cofactors. It forms dimeric complexes. The cyanobacterial oxygen-evolving complex is composed of PsbO, CyanoQ (PsbQ), PsbV and PsbU. Requires heme c as cofactor.

The protein resides in the cellular thylakoid membrane. Functionally, one of the extrinsic, lumenal subunits of photosystem II (PSII). PSII is a light-driven water plastoquinone oxidoreductase, using light energy to abstract electrons from H(2)O, generating a proton gradient subsequently used for ATP formation. The extrinsic proteins stabilize the structure of photosystem II oxygen-evolving complex (OEC), the ion environment of oxygen evolution and protect the OEC against heat-induced inactivation. Low-potential cytochrome c that plays a role in the OEC of PSII, required for normal function or stabilization of PSII. The sequence is that of Photosystem II extrinsic protein V from Synechocystis sp. (strain ATCC 27184 / PCC 6803 / Kazusa).